The chain runs to 333 residues: Acetoin:2,6-dichlorophenolindophenol oxidoreductase subunit alpha (333 aa).

As to quaternary structure, tetramer of 2 alpha and 2 beta subunits. Thiamine diphosphate is required as a cofactor.

Its pathway is ketone degradation; acetoin degradation. Its function is as follows. Catalyzes the 2,6-dichlorophenolindophenol-dependent cleavage of acetoin into acetate and acetaldehyde. The alpha subunit is probably the catalytic subunit of the enzyme. This chain is Acetoin:2,6-dichlorophenolindophenol oxidoreductase subunit alpha (acoA), found in Bacillus subtilis (strain 168).